The sequence spans 240 residues: Uridylate kinase (240 aa).

14 to 17 (KLSG) contributes to the ATP binding site. Residue Gly-56 participates in UMP binding. ATP contacts are provided by Gly-57 and Arg-61. UMP-binding positions include Asp-76 and 137–144 (TGNPFFTT). Residues Thr-164, Tyr-170, and Asp-173 each contribute to the ATP site.

It belongs to the UMP kinase family. In terms of assembly, homohexamer.

The protein localises to the cytoplasm. It carries out the reaction UMP + ATP = UDP + ADP. It functions in the pathway pyrimidine metabolism; CTP biosynthesis via de novo pathway; UDP from UMP (UMPK route): step 1/1. Inhibited by UTP. Functionally, catalyzes the reversible phosphorylation of UMP to UDP. This Paracidovorax citrulli (strain AAC00-1) (Acidovorax citrulli) protein is Uridylate kinase.